The following is a 278-amino-acid chain: HTH-type transcriptional activator RhaS (278 aa).

The HTH araC/xylS-type domain maps to 174-272 (NLLLAWLEDH…NWSPRDIRQG (99 aa)). 2 consecutive DNA-binding regions (H-T-H motif) follow at residues 191–212 (DAVADQFSLSLRTLHRQLKQQT) and 239–262 (VTDIAYRCGFSDSNHFSTLFHREF).

In terms of assembly, binds DNA as a dimer.

It localises to the cytoplasm. Activates expression of the rhaBAD and rhaT operons. The polypeptide is HTH-type transcriptional activator RhaS (Shigella boydii serotype 18 (strain CDC 3083-94 / BS512)).